The following is a 1347-amino-acid chain: Protocadherin-11 X-linked (1347 aa).

Residues 1 to 23 (MDLLSGTYIFAVLLACVVFHSGA) form the signal peptide. Over 24 to 812 (QEKNYTIREE…VSSPTSDYVK (789 aa)) the chain is Extracellular. Cadherin domains follow at residues 26 to 139 (KNYT…APLF), 140 to 249 (PATV…HPVF), 250 to 355 (KETE…VPSI), 362 to 466 (NPIN…APVF), 467 to 570 (TQSF…SPVF), 571 to 673 (THNE…KPVF), and 677 to 795 (PSNY…APVT). N-linked (GlcNAc...) asparagine glycosylation is found at asparagine 27, asparagine 48, and asparagine 54. N-linked (GlcNAc...) asparagine glycosylation is present at asparagine 344. An N-linked (GlcNAc...) asparagine glycan is attached at asparagine 553. An N-linked (GlcNAc...) asparagine glycan is attached at asparagine 773. The chain crosses the membrane as a helical span at residues 813-833 (ILVAAVAGTVTVVVVIFITAV). Residues 834-1347 (VRCRQAPHLK…DSPIMEEHPL (514 aa)) are Cytoplasmic-facing. Disordered stretches follow at residues 1031–1050 (IWIHPQPQRKSEGKGAGKSQ), 1057–1091 (LPEGSQESSSDGGLGEHDAGSLTSTSHGLPLGYPQ), 1097–1116 (RATPSNRTEGDGNSDPESTF), and 1325–1347 (TFTPRQQARPSRGDSPIMEEHPL).

It is found in the cell membrane. Functionally, potential calcium-dependent cell-adhesion protein. The protein is Protocadherin-11 X-linked (PCDH11X) of Pongo pygmaeus (Bornean orangutan).